The sequence spans 509 residues: DNA nucleotidylexotransferase (509 aa).

Residues 1-25 (MDPLCTASSGPRKKRPRQVGASMAS) are disordered. The short motif at 11 to 17 (PRKKRPR) is the Nuclear localization signal element. In terms of domain architecture, BRCT spans 27–124 (PHDIKFQNLV…KPVEITGKHQ (98 aa)). The mediates interaction with DNTTIP2 stretch occupies residues 151–509 (SQYACQRKTT…DYIEPWERNA (359 aa)). The tract at residues 258-262 (VGLKT) is involved in DNA binding. A 2'-deoxyribonucleoside 5'-triphosphate is bound by residues 333-338 (GFRRGK) and 342-345 (HDVD). Residues D343, D345, and D433 each contribute to the Mg(2+) site. An a 2'-deoxyribonucleoside 5'-triphosphate-binding site is contributed by 448–449 (GW).

It belongs to the DNA polymerase type-X family. As to quaternary structure, interacts with PRP19 and DNTTIP1. Forms a ternary complex with DNTTIP2 and core histone. Released from this complex by PCNA. Interacts with TRERF1. It depends on Mg(2+) as a cofactor.

It localises to the nucleus. It carries out the reaction DNA(n) + a 2'-deoxyribonucleoside 5'-triphosphate = DNA(n+1) + diphosphate. In terms of biological role, template-independent DNA polymerase which catalyzes the random addition of deoxynucleoside 5'-triphosphate to the 3'-end of a DNA initiator. One of the in vivo functions of this enzyme is the addition of nucleotides at the junction (N region) of rearranged Ig heavy chain and T-cell receptor gene segments during the maturation of B- and T-cells. In Bos taurus (Bovine), this protein is DNA nucleotidylexotransferase (DNTT).